Reading from the N-terminus, the 89-residue chain is Small ribosomal subunit protein uS14 (89 aa).

This sequence belongs to the universal ribosomal protein uS14 family. In terms of assembly, part of the 30S ribosomal subunit. Contacts proteins S3 and S10.

Its function is as follows. Binds 16S rRNA, required for the assembly of 30S particles and may also be responsible for determining the conformation of the 16S rRNA at the A site. This Streptococcus pneumoniae serotype 2 (strain D39 / NCTC 7466) protein is Small ribosomal subunit protein uS14.